A 532-amino-acid polypeptide reads, in one-letter code: uncharacterized protein (532 aa).

The next 13 membrane-spanning stretches (helical) occupy residues 13-33 (MSLL…QTLL), 53-73 (WLTT…AFLI), 80-100 (SLFL…GIAP), 111-131 (IQAV…LLIF), 142-162 (IFGL…GWII), 169-189 (IMFY…FFIF), 203-223 (LGAI…SEAG), 231-251 (IVLS…VQQL), 273-293 (VINI…PIYL), 306-326 (LLLL…GILF), 334-354 (LAII…QLTI), 361-381 (IMLI…PVMT), and 483-503 (INDA…LSIF).

Belongs to the major facilitator superfamily. EmrB family.

The protein resides in the cell membrane. This is an uncharacterized protein from Bacillus subtilis (strain 168).